We begin with the raw amino-acid sequence, 186 residues long: Pyridoxal 5'-phosphate synthase subunit PdxT (186 aa).

Residue 46-48 (GES) participates in L-glutamine binding. Cys75 (nucleophile) is an active-site residue. Residues Arg101 and 127–128 (IR) contribute to the L-glutamine site. Residues His164 and Glu166 each act as charge relay system in the active site.

Belongs to the glutaminase PdxT/SNO family. In terms of assembly, in the presence of PdxS, forms a dodecamer of heterodimers. Only shows activity in the heterodimer.

It carries out the reaction aldehydo-D-ribose 5-phosphate + D-glyceraldehyde 3-phosphate + L-glutamine = pyridoxal 5'-phosphate + L-glutamate + phosphate + 3 H2O + H(+). The catalysed reaction is L-glutamine + H2O = L-glutamate + NH4(+). The protein operates within cofactor biosynthesis; pyridoxal 5'-phosphate biosynthesis. In terms of biological role, catalyzes the hydrolysis of glutamine to glutamate and ammonia as part of the biosynthesis of pyridoxal 5'-phosphate. The resulting ammonia molecule is channeled to the active site of PdxS. This Methanococcus aeolicus (strain ATCC BAA-1280 / DSM 17508 / OCM 812 / Nankai-3) protein is Pyridoxal 5'-phosphate synthase subunit PdxT.